The following is a 306-amino-acid chain: tRNA dimethylallyltransferase (306 aa).

G14 to S21 contributes to the ATP binding site. A substrate-binding site is contributed by T16–S21. The segment at D39 to L42 is interaction with substrate tRNA.

This sequence belongs to the IPP transferase family. In terms of assembly, monomer. Mg(2+) serves as cofactor.

The enzyme catalyses adenosine(37) in tRNA + dimethylallyl diphosphate = N(6)-dimethylallyladenosine(37) in tRNA + diphosphate. Its function is as follows. Catalyzes the transfer of a dimethylallyl group onto the adenine at position 37 in tRNAs that read codons beginning with uridine, leading to the formation of N6-(dimethylallyl)adenosine (i(6)A). The sequence is that of tRNA dimethylallyltransferase from Synechococcus sp. (strain ATCC 27144 / PCC 6301 / SAUG 1402/1) (Anacystis nidulans).